The chain runs to 127 residues: MAQSVPPGDINTQPGSKIVFNAPYDDKHTYHIKITNAGGRRIGWAIKTTNMRRLGVDPPCGVLDPKESVLMAVSCDTFNAATEDLNNDRITIEWTNTPDGAAKQFRREWFQGDGMVRRKNLPIEYNL.

Alanine 2 carries the N-acetylalanine modification. An MSP domain is found at 9-126 (DINTQPGSKI…RRKNLPIEYN (118 aa)).

In terms of assembly, forms filaments 10 nm wide, with a characteristic substructure repeating axially at 9 nm. Sperm.

It is found in the cell projection. The protein localises to the pseudopodium. The protein resides in the cytoplasm. Its subcellular location is the cytoskeleton. Central component in molecular interactions underlying sperm crawling. Forms an extensive filament system that extends from sperm villipoda, along the leading edge of the pseudopod. The protein is Major sperm protein isoform beta of Ascaris suum (Pig roundworm).